The primary structure comprises 921 residues: Bifunctional aspartokinase/homoserine dehydrogenase, chloroplastic (921 aa).

A chloroplast-targeting transit peptide spans 1–87; sequence SLSSAISPSS…DDSVEKVHLP (87 aa). Positions 88 to 339 are aspartokinase; it reads RGAMWSIHKF…VSEAVVLKTL (252 aa). An interface region spans residues 340-567; sequence SYQEAWEMSY…LSRTTIAVGI (228 aa). 2 consecutive ACT domains span residues 417–489 and 498–575; these read VEGT…QVAN and TVGQ…LIGA. Positions 568–921 are homoserine dehydrogenase; it reads VGPGLIGATL…RLASYLGAPS (354 aa). I573 lines the NAD(+) pocket. NADP(+) is bound by residues I573, R605, T654, and K678. Position 573 (I573) interacts with NADPH. T654 is an NAD(+) binding site. The NADPH site is built by T654 and K678. 4 residues coordinate Na(+): E705, V708, A710, and L712. Residues G763 and E766 each coordinate NADP(+). L-homoserine is bound by residues E766 and D777. Residue K781 is the Proton donor of the active site. G898 is an NAD(+) binding site. G898 serves as a coordination point for NADP(+). G898 contributes to the NADPH binding site.

This sequence in the N-terminal section; belongs to the aspartokinase family. In the C-terminal section; belongs to the homoserine dehydrogenase family. A metal cation is required as a cofactor.

Its subcellular location is the plastid. It localises to the chloroplast. It catalyses the reaction L-homoserine + NADP(+) = L-aspartate 4-semialdehyde + NADPH + H(+). The catalysed reaction is L-homoserine + NAD(+) = L-aspartate 4-semialdehyde + NADH + H(+). It carries out the reaction L-aspartate + ATP = 4-phospho-L-aspartate + ADP. The protein operates within amino-acid biosynthesis; L-lysine biosynthesis via DAP pathway; (S)-tetrahydrodipicolinate from L-aspartate: step 1/4. It participates in amino-acid biosynthesis; L-methionine biosynthesis via de novo pathway; L-homoserine from L-aspartate: step 1/3. Its pathway is amino-acid biosynthesis; L-methionine biosynthesis via de novo pathway; L-homoserine from L-aspartate: step 3/3. It functions in the pathway amino-acid biosynthesis; L-threonine biosynthesis; L-threonine from L-aspartate: step 1/5. The protein operates within amino-acid biosynthesis; L-threonine biosynthesis; L-threonine from L-aspartate: step 3/5. Bifunctional aspartate kinase and homoserine dehydrogenase that catalyzes the first and the third steps toward the synthesis of lysine, methionine and threonine from aspartate. The protein is Bifunctional aspartokinase/homoserine dehydrogenase, chloroplastic of Daucus carota (Wild carrot).